We begin with the raw amino-acid sequence, 286 residues long: Main hemagglutinin component type C (286 aa).

A 1-alpha repeat occupies 2–55 (SQTNANDLRNNEVFFISPSNNTNKVLDKISQSEVKLWNKLSGANQKWRLIYDTN). 2 Ricin B-type lectin domains span residues 12–140 (NEVF…FKFS) and 180–284 (DSSR…WIIN). A 1-beta repeat occupies 56–100 (KQAYKIKVMDNTSLILTWNAPLSSVSVKTDTNGDNQYWYLLQNYI). One copy of the 1-gamma repeat lies at 101–148 (SRNVIIRNYMNPNLVLQYNIDDTLMVSTQTSSSNQFFKFSNCIYEALN). Residues 149-193 (NRNCKLQTQLNSDRFLSKNLNSQIIVLWQWFDSSRQKWIIEYNET) form a 2-alpha repeat. Positions 167–183 (NLNSQIIVLWQWFDSSR) are sugar-binding site 1. The 2-beta repeat unit spans residues 194–239 (KSAYTLKCQENNRYLTWIQNSNNYVETYQSTDSLIQYWNINYLDND). Residues 240–286 (ASKYILYNLQDTNRVLDVYNSQIANGTHVIVDSYHGNTNQQWIINLI) form a 2-gamma repeat. Residues 256-279 (DVYNSQIANGTHVIVDSYHGNTNQ) are sugar-binding site 2.

In terms of assembly, botulinum toxins are produced as progenitor toxins of large molecular sizes of 12S (M toxin) and 16S (L toxin). M toxin consists of a non-toxic, non-hemagglutinin component (NTNHA) and the neurotoxin. L toxin consists of the M toxin and the 3 subcomponents of hemagglutinin (HA). HA is composed of subcomponents of 70, 33, and 17 kDa. The 70 kDa subcomponent undergoes proteolytic processing and is split into HA-55 (also called HA-53 and HA3b) and HA-22-23 (also called HA3a). The stoichiometry of the whole complex has been modeled as one BoNT/C, one NTNHA, three HA-70, six HA-33 and three HA-17.

The protein localises to the secreted. Its function is as follows. Agglutinates human erythrocytes. The hemagglutinin (HA) component of the progenitor toxin protects the structural integrity of botulinum neurotoxin; may increase internalization of the neurotoxin into the bloodstream of the host. The hemagglutinin (HA) component is involved in binding to the upper small intestine through interactions with glycolipids and glycoproteins containing sialic acid moieties. Binds galactose or oligosaccharides with galactose at their non-reducing end. Binds eukaryotic host mucins; binding is inhibited by N-acetyl-beta-neuraminic acid, N-acetyl-D-galactosamine, galactose, and methyl N-acetyl-beta-neuraminic acid. Binds N-acetyl-beta-neuraminic acid, N-acetyl-D-galactosamine and galactose (but not glucose) via 2 sites. The sequence is that of Main hemagglutinin component type C from Clostridium botulinum C (Clostridium botulinum C bacteriophage).